The primary structure comprises 282 residues: Aldo-keto reductase MUL_1987 (282 aa).

Residue Y57 is the Proton donor of the active site. NADPH-binding residues include L197, I235, S238, T246, N247, and R273.

It belongs to the aldo/keto reductase family.

The sequence is that of Aldo-keto reductase MUL_1987 from Mycobacterium ulcerans (strain Agy99).